We begin with the raw amino-acid sequence, 177 residues long: Peptidyl-tRNA hydrolase (177 aa).

Y18 provides a ligand contact to tRNA. The active-site Proton acceptor is the H23. TRNA-binding residues include F65, N67, and N113.

Belongs to the PTH family. In terms of assembly, monomer.

Its subcellular location is the cytoplasm. The enzyme catalyses an N-acyl-L-alpha-aminoacyl-tRNA + H2O = an N-acyl-L-amino acid + a tRNA + H(+). Its function is as follows. Hydrolyzes ribosome-free peptidyl-tRNAs (with 1 or more amino acids incorporated), which drop off the ribosome during protein synthesis, or as a result of ribosome stalling. Functionally, catalyzes the release of premature peptidyl moieties from peptidyl-tRNA molecules trapped in stalled 50S ribosomal subunits, and thus maintains levels of free tRNAs and 50S ribosomes. This chain is Peptidyl-tRNA hydrolase, found in Corynebacterium efficiens (strain DSM 44549 / YS-314 / AJ 12310 / JCM 11189 / NBRC 100395).